We begin with the raw amino-acid sequence, 599 residues long: Sulfite reductase [NADPH] flavoprotein alpha-component (599 aa).

Residues 64 to 202 form the Flavodoxin-like domain; the sequence is VTLISASQTG…AASEWRARVV (139 aa). Residues 70–75, 117–120, and 153–162 each bind FMN; these read SQTGNA, STQG, and LGDTSYEFFC. In terms of domain architecture, FAD-binding FR-type spans 234 to 448; sequence DAPLIATLSV…IEHNDNFRLP (215 aa). FAD is bound by residues Thr322, Ala356, 386-389, 404-406, Tyr410, and 419-422; these read RLYS, TVG, and GGAS. Residues 519–520, 525–529, and Asp561 contribute to the NADP(+) site; these read SR and KIYVQ. Tyr599 lines the FAD pocket.

It belongs to the NADPH-dependent sulphite reductase flavoprotein subunit CysJ family. This sequence in the N-terminal section; belongs to the flavodoxin family. In the C-terminal section; belongs to the flavoprotein pyridine nucleotide cytochrome reductase family. Alpha(8)-beta(8). The alpha component is a flavoprotein, the beta component is a hemoprotein. Requires FAD as cofactor. FMN serves as cofactor.

It catalyses the reaction hydrogen sulfide + 3 NADP(+) + 3 H2O = sulfite + 3 NADPH + 4 H(+). The protein operates within sulfur metabolism; hydrogen sulfide biosynthesis; hydrogen sulfide from sulfite (NADPH route): step 1/1. Component of the sulfite reductase complex that catalyzes the 6-electron reduction of sulfite to sulfide. This is one of several activities required for the biosynthesis of L-cysteine from sulfate. The flavoprotein component catalyzes the electron flow from NADPH -&gt; FAD -&gt; FMN to the hemoprotein component. The sequence is that of Sulfite reductase [NADPH] flavoprotein alpha-component from Salmonella typhimurium (strain LT2 / SGSC1412 / ATCC 700720).